The chain runs to 634 residues: tRNA uridine 5-carboxymethylaminomethyl modification enzyme MnmG (634 aa).

G14–G19 serves as a coordination point for FAD. G279 to F293 is an NAD(+) binding site.

The protein belongs to the MnmG family. As to quaternary structure, homodimer. Heterotetramer of two MnmE and two MnmG subunits. Requires FAD as cofactor.

It is found in the cytoplasm. In terms of biological role, NAD-binding protein involved in the addition of a carboxymethylaminomethyl (cmnm) group at the wobble position (U34) of certain tRNAs, forming tRNA-cmnm(5)s(2)U34. This Xanthomonas campestris pv. campestris (strain B100) protein is tRNA uridine 5-carboxymethylaminomethyl modification enzyme MnmG.